The sequence spans 65 residues: Putative per-hexamer repeat protein 2 (65 aa).

The chain is Putative per-hexamer repeat protein 2 (Phxr2) from Mus musculus (Mouse).